The primary structure comprises 279 residues: Large ribosomal subunit protein uL2 (279 aa).

Disordered regions lie at residues 30 to 59 (EKSL…GGHK) and 225 to 279 (VMNP…KNKR). Positions 50–59 (TTRHKGGGHK) are enriched in basic residues. Residues 253–268 (PEGRTRRPNKESDKLI) are compositionally biased toward basic and acidic residues. Residues 269–279 (VRRRRTGKNKR) show a composition bias toward basic residues.

Belongs to the universal ribosomal protein uL2 family. As to quaternary structure, part of the 50S ribosomal subunit. Forms a bridge to the 30S subunit in the 70S ribosome.

In terms of biological role, one of the primary rRNA binding proteins. Required for association of the 30S and 50S subunits to form the 70S ribosome, for tRNA binding and peptide bond formation. It has been suggested to have peptidyltransferase activity; this is somewhat controversial. Makes several contacts with the 16S rRNA in the 70S ribosome. In Kocuria rhizophila (strain ATCC 9341 / DSM 348 / NBRC 103217 / DC2201), this protein is Large ribosomal subunit protein uL2.